The sequence spans 625 residues: Coagulation factor XI (625 aa).

The signal sequence occupies residues 1–18 (MTLLYQMVHFALFASVAG). Apple domains are found at residues 20-103 (CVTT…SKQC), 110-193 (CSKD…LKSC), 200-283 (CIRD…LQHC), and 291-374 (CHSS…LRLC). Disulfide bonds link cysteine 20–cysteine 103, cysteine 46–cysteine 76, cysteine 50–cysteine 56, cysteine 110–cysteine 193, cysteine 136–cysteine 165, cysteine 140–cysteine 146, cysteine 200–cysteine 283, cysteine 226–cysteine 255, cysteine 230–cysteine 236, cysteine 291–cysteine 374, cysteine 317–cysteine 346, cysteine 321–cysteine 327, cysteine 380–cysteine 500, cysteine 416–cysteine 432, cysteine 514–cysteine 581, cysteine 545–cysteine 560, and cysteine 571–cysteine 599. N-linked (GlcNAc...) asparagine glycans are attached at residues asparagine 90 and asparagine 126. Residues 388-623 (IVGGTQSVHG…YVDWILEKTQ (236 aa)) form the Peptidase S1 domain. The active-site Charge relay system is the histidine 431. An N-linked (GlcNAc...) asparagine glycan is attached at asparagine 450. The active-site Charge relay system is aspartate 480. Asparagine 491 is a glycosylation site (N-linked (GlcNAc...) asparagine). Residue 547–550 (AGYR) participates in heparin binding. Catalysis depends on serine 575, which acts as the Charge relay system.

Belongs to the peptidase S1 family. Plasma kallikrein subfamily. Homodimer; disulfide-linked. After activation the heavy and light chains are also linked by a disulfide bond. Interacts (activated) with F9 (inactive and activated) in calcium-dependent manner. Forms a heterodimer with SERPINA5. Activated by factor XIIa (or XII), which cleaves each polypeptide after Arg-387 into the light chain, which contains the active site, and the heavy chain, which associates with high molecular weight (HMW) kininogen. Activated by F12 (activated); the presence of negatively charged surfaces accelerates activation. Activated by F2 (thrombin); the presence of negatively charged surfaces, such as polyphosphate and dextran sulfate, strongly accelerates activation. Autoactivated; the presence of negatively charged surfaces, such as polyphosphate and dextran sulfate, accelerates autoactivation and autolysis. Post-translationally, N-glycosylated on both chains. N-glycosylated sites mainly consist of nonfucosylated sialylated biantennary (in high abundance) and/or triantennary (in low abundance) complex structures.

It is found in the secreted. The catalysed reaction is Selective cleavage of Arg-|-Ala and Arg-|-Val bonds in factor IX to form factor IXa.. With respect to regulation, inhibited by SERPINA5. In terms of biological role, factor XI triggers the middle phase of the intrinsic pathway of blood coagulation by activating factor IX. In Bos taurus (Bovine), this protein is Coagulation factor XI (F11).